The following is a 240-amino-acid chain: Small ribosomal subunit protein uS2 (240 aa).

This sequence belongs to the universal ribosomal protein uS2 family. Component of the small ribosomal subunit. Mature ribosomes consist of a small (40S) and a large (60S) subunit. The 40S subunit contains about 33 different proteins and 1 molecule of RNA (18S). The 60S subunit contains about 49 different proteins and 3 molecules of RNA (25S, 5.8S and 5S). Interacts with RPS21.

Its subcellular location is the cytoplasm. In terms of biological role, required for the assembly and/or stability of the 40S ribosomal subunit. Required for the processing of the 20S rRNA-precursor to mature 18S rRNA in a late step of the maturation of 40S ribosomal subunits. This chain is Small ribosomal subunit protein uS2, found in Enterocytozoon bieneusi (strain H348) (Microsporidian parasite).